The primary structure comprises 388 residues: Putative C-&gt;U-editing enzyme APOBEC-4 (388 aa).

The 117-residue stretch at P60 to L176 folds into the CMP/dCMP-type deaminase domain. A Zn(2+)-binding site is contributed by H92. E94 acts as the Proton donor in catalysis. Residues C126 and C133 each coordinate Zn(2+). The tract at residues K322–S356 is disordered.

Belongs to the cytidine and deoxycytidylate deaminase family. Requires Zn(2+) as cofactor.

Functionally, putative C to U editing enzyme whose physiological substrate is not yet known. The polypeptide is Putative C-&gt;U-editing enzyme APOBEC-4 (Apobec4) (Rattus norvegicus (Rat)).